The chain runs to 315 residues: Ribosomal RNA small subunit methyltransferase H (315 aa).

Residues 36–38, Asp-56, Phe-81, Asp-103, and Gln-110 contribute to the S-adenosyl-L-methionine site; that span reads GGH.

The protein belongs to the methyltransferase superfamily. RsmH family.

It is found in the cytoplasm. It carries out the reaction cytidine(1402) in 16S rRNA + S-adenosyl-L-methionine = N(4)-methylcytidine(1402) in 16S rRNA + S-adenosyl-L-homocysteine + H(+). Its function is as follows. Specifically methylates the N4 position of cytidine in position 1402 (C1402) of 16S rRNA. This chain is Ribosomal RNA small subunit methyltransferase H, found in Idiomarina loihiensis (strain ATCC BAA-735 / DSM 15497 / L2-TR).